A 110-amino-acid polypeptide reads, in one-letter code: Ribonuclease (110 aa).

Residue Glu73 is the Proton acceptor of the active site. His102 functions as the Proton donor in the catalytic mechanism.

Belongs to the ribonuclease N1/T1 family.

It is found in the secreted. Its function is as follows. Hydrolyzes phosphodiester bonds in RNA, poly- and oligoribonucleotides resulting in 3'-nucleoside monophosphates via 2',3'-cyclophosphate intermediates. The polypeptide is Ribonuclease (Niallia circulans (Bacillus circulans)).